Here is a 21-residue protein sequence, read N- to C-terminus: Cupiennin-6e (21 aa).

The residue at position 21 (Ser-21) is a Serine amide.

Expressed by the venom gland.

The protein resides in the secreted. The protein is Cupiennin-6e of Cupiennius salei (American wandering spider).